We begin with the raw amino-acid sequence, 174 residues long: Small ribosomal subunit protein uS5 (174 aa).

In terms of domain architecture, S5 DRBM spans 19-82 (LREKMVAINR…DEARRKMVKV (64 aa)).

This sequence belongs to the universal ribosomal protein uS5 family. In terms of assembly, part of the 30S ribosomal subunit. Contacts proteins S4 and S8.

Functionally, with S4 and S12 plays an important role in translational accuracy. Its function is as follows. Located at the back of the 30S subunit body where it stabilizes the conformation of the head with respect to the body. In Azoarcus sp. (strain BH72), this protein is Small ribosomal subunit protein uS5.